A 255-amino-acid polypeptide reads, in one-letter code: NAD(P)H-quinone oxidoreductase subunit K, chloroplastic (255 aa).

Residues cysteine 47, cysteine 48, cysteine 112, and cysteine 143 each coordinate [4Fe-4S] cluster.

The protein belongs to the complex I 20 kDa subunit family. In terms of assembly, NDH is composed of at least 16 different subunits, 5 of which are encoded in the nucleus. Requires [4Fe-4S] cluster as cofactor.

It is found in the plastid. It localises to the chloroplast thylakoid membrane. It carries out the reaction a plastoquinone + NADH + (n+1) H(+)(in) = a plastoquinol + NAD(+) + n H(+)(out). It catalyses the reaction a plastoquinone + NADPH + (n+1) H(+)(in) = a plastoquinol + NADP(+) + n H(+)(out). In terms of biological role, NDH shuttles electrons from NAD(P)H:plastoquinone, via FMN and iron-sulfur (Fe-S) centers, to quinones in the photosynthetic chain and possibly in a chloroplast respiratory chain. The immediate electron acceptor for the enzyme in this species is believed to be plastoquinone. Couples the redox reaction to proton translocation, and thus conserves the redox energy in a proton gradient. The polypeptide is NAD(P)H-quinone oxidoreductase subunit K, chloroplastic (Zygnema circumcarinatum (Green alga)).